The chain runs to 206 residues: Thiamine-phosphate synthase (206 aa).

Residues 36 to 40 and N68 contribute to the 4-amino-2-methyl-5-(diphosphooxymethyl)pyrimidine site; that span reads QLRAK. Residues D69 and D88 each contribute to the Mg(2+) site. S105 provides a ligand contact to 4-amino-2-methyl-5-(diphosphooxymethyl)pyrimidine. 131 to 133 serves as a coordination point for 2-[(2R,5Z)-2-carboxy-4-methylthiazol-5(2H)-ylidene]ethyl phosphate; sequence TPT. Residue K134 coordinates 4-amino-2-methyl-5-(diphosphooxymethyl)pyrimidine. G162 lines the 2-[(2R,5Z)-2-carboxy-4-methylthiazol-5(2H)-ylidene]ethyl phosphate pocket.

The protein belongs to the thiamine-phosphate synthase family. Mg(2+) serves as cofactor.

The catalysed reaction is 2-[(2R,5Z)-2-carboxy-4-methylthiazol-5(2H)-ylidene]ethyl phosphate + 4-amino-2-methyl-5-(diphosphooxymethyl)pyrimidine + 2 H(+) = thiamine phosphate + CO2 + diphosphate. It catalyses the reaction 2-(2-carboxy-4-methylthiazol-5-yl)ethyl phosphate + 4-amino-2-methyl-5-(diphosphooxymethyl)pyrimidine + 2 H(+) = thiamine phosphate + CO2 + diphosphate. The enzyme catalyses 4-methyl-5-(2-phosphooxyethyl)-thiazole + 4-amino-2-methyl-5-(diphosphooxymethyl)pyrimidine + H(+) = thiamine phosphate + diphosphate. It participates in cofactor biosynthesis; thiamine diphosphate biosynthesis; thiamine phosphate from 4-amino-2-methyl-5-diphosphomethylpyrimidine and 4-methyl-5-(2-phosphoethyl)-thiazole: step 1/1. Functionally, condenses 4-methyl-5-(beta-hydroxyethyl)thiazole monophosphate (THZ-P) and 2-methyl-4-amino-5-hydroxymethyl pyrimidine pyrophosphate (HMP-PP) to form thiamine monophosphate (TMP). This is Thiamine-phosphate synthase from Thermus thermophilus (strain ATCC BAA-163 / DSM 7039 / HB27).